A 289-amino-acid chain; its full sequence is NFIL3 like protein (289 aa).

The segment at 1–27 is disordered; sequence MDVGFSGLPDVSQSHSKTLWGARGRGP. The region spanning 42–105 is the bZIP domain; that stretch reads DTVYWEKRRK…GLLPLTGGPR (64 aa). Residues 48-64 are basic motif; that stretch reads KRRKNNEAAKRSREKRR. The tract at residues 70–91 is leucine-zipper; sequence IEGRLAALMEENALLKGELKAL.

This sequence belongs to the bZIP family. NFIL3 subfamily.

Its subcellular location is the nucleus. In Homo sapiens (Human), this protein is NFIL3 like protein.